The following is a 70-amino-acid chain: Cold shock-like protein CspI (70 aa).

The CSD domain maps to 7–67 (GLVKWFNPEK…GPKGPAAVHV (61 aa)).

It is found in the cytoplasm. This is Cold shock-like protein CspI (cspI) from Escherichia coli O6:H1 (strain CFT073 / ATCC 700928 / UPEC).